Consider the following 318-residue polypeptide: MANTLEQLKSYTTIVADTGDIEAIKRYQPEDATTNPSLILKAAQIPEYSALIDNAIAWAKLQSADIEQQIDDASDKLAVNIGVEILKLVPGRISTEVDARLSFDKEKSIAKAHKLVRLYQEAGVDKSRILIKLASTWEGICAAKELEQEGINCNLTLLFSFAQARACAEAGVYLISPFVGRILDWYKKDTGKDYDAVNDPGVVSVTEIYNYYKQHGYNTVVMGASFRNIGEIIELAGCDRLTIGPSLLEELANSQVAIQPKLIPASTTVAAGEPLTEAQFRWDFNQDPMAVDKLAEGIRNFAIDQGKLEVMLKAKLAN.

Lys-132 functions as the Schiff-base intermediate with substrate in the catalytic mechanism.

The protein belongs to the transaldolase family. Type 1 subfamily. Homodimer.

The protein resides in the cytoplasm. The catalysed reaction is D-sedoheptulose 7-phosphate + D-glyceraldehyde 3-phosphate = D-erythrose 4-phosphate + beta-D-fructose 6-phosphate. The protein operates within carbohydrate degradation; pentose phosphate pathway; D-glyceraldehyde 3-phosphate and beta-D-fructose 6-phosphate from D-ribose 5-phosphate and D-xylulose 5-phosphate (non-oxidative stage): step 2/3. Its function is as follows. Transaldolase is important for the balance of metabolites in the pentose-phosphate pathway. This chain is Transaldolase, found in Shewanella sp. (strain MR-7).